We begin with the raw amino-acid sequence, 333 residues long: Ferrochelatase (333 aa).

The Fe cation site is built by His202 and Glu284.

It belongs to the ferrochelatase family.

Its subcellular location is the cytoplasm. It catalyses the reaction heme b + 2 H(+) = protoporphyrin IX + Fe(2+). It participates in porphyrin-containing compound metabolism; protoheme biosynthesis; protoheme from protoporphyrin-IX: step 1/1. Functionally, catalyzes the ferrous insertion into protoporphyrin IX. This Francisella tularensis subsp. tularensis (strain FSC 198) protein is Ferrochelatase.